The following is a 447-amino-acid chain: Neuraminidase (447 aa).

At 1-6 (MNPNQK) the chain is on the intravirion side. The helical transmembrane segment at 7-27 (IITIGSICMGIGIISLILQIG) threads the bilayer. The involved in apical transport and lipid raft association stretch occupies residues 11–33 (GSICMGIGIISLILQIGNIISMW). Residues 28–447 (NIISMWVSHS…GAELPFTIDK (420 aa)) lie on the Virion surface side of the membrane. A hypervariable stalk region region spans residues 36–68 (HSIQTENQNHHEACNPSIAGQDAASVALAGNSS). N-linked (GlcNAc...) asparagine; by host glycosylation occurs at Asn-66. The interval 69–447 (LCPISGWAIY…GAELPFTIDK (379 aa)) is head of neuraminidase. 8 disulfide bridges follow: Cys-70–Cys-395, Cys-102–Cys-107, Cys-162–Cys-209, Cys-211–Cys-216, Cys-257–Cys-270, Cys-259–Cys-268, Cys-296–Cys-313, and Cys-399–Cys-424. Substrate is bound at residue Arg-96. A glycan (N-linked (GlcNAc...) asparagine; by host) is linked at Asn-124. Asp-129 (proton donor/acceptor) is an active-site residue. Arg-130 is a substrate binding site. Asn-213 carries N-linked (GlcNAc...) asparagine; by host glycosylation. 255 to 256 (EE) lines the substrate pocket. Arg-271 lines the substrate pocket. Ca(2+)-binding residues include Asp-272, Gly-276, and Asp-302. Arg-346 contributes to the substrate binding site. Catalysis depends on Tyr-380, which acts as the Nucleophile.

Belongs to the glycosyl hydrolase 34 family. In terms of assembly, homotetramer. It depends on Ca(2+) as a cofactor. N-glycosylated.

The protein localises to the virion membrane. The protein resides in the host apical cell membrane. It carries out the reaction Hydrolysis of alpha-(2-&gt;3)-, alpha-(2-&gt;6)-, alpha-(2-&gt;8)- glycosidic linkages of terminal sialic acid residues in oligosaccharides, glycoproteins, glycolipids, colominic acid and synthetic substrates.. Its activity is regulated as follows. Inhibited by the neuraminidase inhibitors zanamivir (Relenza) and oseltamivir (Tamiflu). These drugs interfere with the release of progeny virus from infected cells and are effective against all influenza strains. Resistance to neuraminidase inhibitors is quite rare. Catalyzes the removal of terminal sialic acid residues from viral and cellular glycoconjugates. Cleaves off the terminal sialic acids on the glycosylated HA during virus budding to facilitate virus release. Additionally helps virus spread through the circulation by further removing sialic acids from the cell surface. These cleavages prevent self-aggregation and ensure the efficient spread of the progeny virus from cell to cell. Otherwise, infection would be limited to one round of replication. Described as a receptor-destroying enzyme because it cleaves a terminal sialic acid from the cellular receptors. May facilitate viral invasion of the upper airways by cleaving the sialic acid moieties on the mucin of the airway epithelial cells. Likely to plays a role in the budding process through its association with lipid rafts during intracellular transport. May additionally display a raft-association independent effect on budding. Plays a role in the determination of host range restriction on replication and virulence. Sialidase activity in late endosome/lysosome traffic seems to enhance virus replication. The sequence is that of Neuraminidase from Aves.